A 460-amino-acid chain; its full sequence is Anthocyanidin 3-O-glucoside 5-O-glucosyltransferase 1 (460 aa).

The signal sequence occupies residues 1 to 22 (MVRRRVLLATFPAQGHINPALQ). H16 serves as the catalytic Proton acceptor. Position 16 (H16) interacts with an anthocyanidin. Residues Q338, H353, W356, N357, S358, E361, D377, and Q378 each coordinate UDP-alpha-D-glucose.

This sequence belongs to the UDP-glycosyltransferase family.

The enzyme catalyses an anthocyanidin 3-O-beta-D-glucoside + UDP-alpha-D-glucose = an anthocyanidin 3,5-di-O-beta-D-glucoside + UDP + 2 H(+). It participates in pigment biosynthesis; anthocyanin biosynthesis. Functionally, catalyzes the glucosylation at the O-5 position of anthocyanidin 3-glucosides to form anthocyanidin 3,5-di-O-glucosides using UDP-glucose as sugar donor. Anthocyanidin 3,5-di-O-glucosides are molecules that are responsible for pigmentation. Also acts on anthocyanidin 3-O-(6-O-malonylglucoside). Much less active with hydroxycinnamoylglucose derivatives. No activity in the absence of the 3-O-glucoside group. The sequence is that of Anthocyanidin 3-O-glucoside 5-O-glucosyltransferase 1 (PF3R4) from Perilla frutescens (Beefsteak mint).